The primary structure comprises 195 residues: Imidazoleglycerol-phosphate dehydratase (195 aa).

It belongs to the imidazoleglycerol-phosphate dehydratase family.

The protein resides in the cytoplasm. It carries out the reaction D-erythro-1-(imidazol-4-yl)glycerol 3-phosphate = 3-(imidazol-4-yl)-2-oxopropyl phosphate + H2O. The protein operates within amino-acid biosynthesis; L-histidine biosynthesis; L-histidine from 5-phospho-alpha-D-ribose 1-diphosphate: step 6/9. In Burkholderia cenocepacia (strain HI2424), this protein is Imidazoleglycerol-phosphate dehydratase.